Consider the following 964-residue polypeptide: Glycine dehydrogenase (decarboxylating) (964 aa).

Position 711 is an N6-(pyridoxal phosphate)lysine (Lys711).

It belongs to the GcvP family. The glycine cleavage system is composed of four proteins: P, T, L and H. Pyridoxal 5'-phosphate serves as cofactor.

It catalyses the reaction N(6)-[(R)-lipoyl]-L-lysyl-[glycine-cleavage complex H protein] + glycine + H(+) = N(6)-[(R)-S(8)-aminomethyldihydrolipoyl]-L-lysyl-[glycine-cleavage complex H protein] + CO2. The glycine cleavage system catalyzes the degradation of glycine. The P protein binds the alpha-amino group of glycine through its pyridoxal phosphate cofactor; CO(2) is released and the remaining methylamine moiety is then transferred to the lipoamide cofactor of the H protein. In Prochlorococcus marinus (strain SARG / CCMP1375 / SS120), this protein is Glycine dehydrogenase (decarboxylating).